The sequence spans 152 residues: Large ribosomal subunit protein uL15 (152 aa).

A disordered region spans residues 1–54; it reads MGLKLNELSPGVGAKKTAHRKGRGIGSGLGKTGGRGVKGQKSRSGSGVRRGFEG. Residues 24-37 are compositionally biased toward gly residues; the sequence is GIGSGLGKTGGRGV.

Belongs to the universal ribosomal protein uL15 family. In terms of assembly, part of the 50S ribosomal subunit.

Binds to the 23S rRNA. This Psychrobacter sp. (strain PRwf-1) protein is Large ribosomal subunit protein uL15.